The primary structure comprises 152 residues: Superoxide dismutase [Cu-Zn] (152 aa).

Residues histidine 45, histidine 47, and histidine 62 each contribute to the Cu cation site. Residues cysteine 56 and cysteine 145 are joined by a disulfide bond. The Zn(2+) site is built by histidine 62, histidine 70, histidine 79, and aspartate 82. Histidine 119 lines the Cu cation pocket.

The protein belongs to the Cu-Zn superoxide dismutase family. As to quaternary structure, homodimer. Cu cation serves as cofactor. Zn(2+) is required as a cofactor.

The protein localises to the cytoplasm. It catalyses the reaction 2 superoxide + 2 H(+) = H2O2 + O2. Destroys radicals which are normally produced within the cells and which are toxic to biological systems. In Zantedeschia aethiopica (White calla lily), this protein is Superoxide dismutase [Cu-Zn] (SODCC).